A 522-amino-acid polypeptide reads, in one-letter code: Signal transduction histidine-protein kinase/phosphatase MprB (522 aa).

Topologically, residues 1–30 are cytoplasmic; the sequence is MIRLYRPQRPPLRAPLRATPSLSLRWRVML. The helical transmembrane segment at 31-51 threads the bilayer; sequence LAMSMVAMVVVLMAFAVYAVI. Topologically, residues 52–167 are extracellular; the sequence is SAALYSDIDN…PTEAVMNKLR (116 aa). Residues 168–188 traverse the membrane as a helical segment; that stretch reads WVLLIVGGVGVAVAAVAGGMV. The Cytoplasmic portion of the chain corresponds to 189 to 522; it reads TRAGLRPVAR…SVDSQSARAR (334 aa). The region spanning 190–242 is the HAMP domain; the sequence is RAGLRPVARLTEAAERVARTDDLRPIPVFGSDELARLTESFNLMLRALAESRE. Residues 250–470 enclose the Histidine kinase domain; the sequence is DAGHELRTPL…SFYVLLPGRS (221 aa). Residue His253 is modified to Phosphohistidine; by autocatalysis. Residues 467-522 are disordered; that stretch reads PGRSLPPAGHSTPAGESETDQAEAATDPAVPVAGDTANSRESANVISVDSQSARAR. Over residues 502–522 the composition is skewed to polar residues; the sequence is TANSRESANVISVDSQSARAR.

Mg(2+) is required as a cofactor. Requires Mn(2+) as cofactor. Post-translationally, autophosphorylated.

It localises to the cell membrane. It carries out the reaction ATP + protein L-histidine = ADP + protein N-phospho-L-histidine.. Member of the two-component regulatory system MprB/MprA which contributes to maintaining a balance among several systems involved in stress resistance and is required for establishment and maintenance of persistent infection in the host. In response to environmental signals MprB acts both as a membrane-associated protein kinase that undergoes autophosphorylation and subsequently transfers the phosphate to MprA, and a protein phosphatase that dephosphorylates phospho-MprA. This chain is Signal transduction histidine-protein kinase/phosphatase MprB (mprB), found in Mycolicibacterium paratuberculosis (strain ATCC BAA-968 / K-10) (Mycobacterium paratuberculosis).